We begin with the raw amino-acid sequence, 107 residues long: Nucleoid-associated protein MCA1327 (107 aa).

It belongs to the YbaB/EbfC family. As to quaternary structure, homodimer.

It localises to the cytoplasm. The protein resides in the nucleoid. In terms of biological role, binds to DNA and alters its conformation. May be involved in regulation of gene expression, nucleoid organization and DNA protection. The chain is Nucleoid-associated protein MCA1327 from Methylococcus capsulatus (strain ATCC 33009 / NCIMB 11132 / Bath).